Here is a 291-residue protein sequence, read N- to C-terminus: 33 kDa chaperonin (291 aa).

Cystine bridges form between Cys-237-Cys-239 and Cys-270-Cys-273.

Belongs to the HSP33 family. Post-translationally, under oxidizing conditions two disulfide bonds are formed involving the reactive cysteines. Under reducing conditions zinc is bound to the reactive cysteines and the protein is inactive.

It is found in the cytoplasm. In terms of biological role, redox regulated molecular chaperone. Protects both thermally unfolding and oxidatively damaged proteins from irreversible aggregation. Plays an important role in the bacterial defense system toward oxidative stress. The chain is 33 kDa chaperonin from Bacillus cytotoxicus (strain DSM 22905 / CIP 110041 / 391-98 / NVH 391-98).